The primary structure comprises 962 residues: MTFSMRDLDQALQGAGQKSGIEIWRIENFKPVTVPQESHGKFFTGDSYIVLKTTASRSGSLHHDIHYWLGKDSSQDEAGAVAVMTVELDSALGGRAVQYREVQGHETEKFLSYFKPCIIPQEGGVASGFNHVKPEEHQTRLYICKGKHVVRVKEVPFVRSTLNHEDVFILDTESKIFQFSGSKSSIQERAKALEVVQYIKDTYHDGKCDIAAVEDGRMMADAEAGEFWGLFGGFAPLPKKPAVNDDETAASDGIKLFSVEKGQTDAVEAECLTKELLDTNKCYILDCGLELFVWKGRSTSIDQRKSATEAAEEFFRSSEPPKSNLVSVMEGYETVMFRSKFDSWPASSTIAEPQQGRGKVAALLQRQGVNVQGLVKTSSSSSKDEPKPYIDGTGNLQVWRINCEEKILLEAAEQSKFYSGDCYILQYSYPGEDREEHLVGTWFGKQSVEEDRASAISLANKMVESMKFVPAQARINEGKEPIQFFVIMQSFITFKGGVSDAFKKYIAENDIPDTTYEAEGVALFRVQGSGPENMQAIQIEAASAGLNSSHCYILHGDSTVFTWCGNLTSSEDQELMERMLDLIKPNEPTKAQKEGSESEQFWELLGGKSEYPSQKIKRDGESDPHLFSCTYTNESLKATEIFNFTQDDLMTEDIFILDCHTEVFVWVGQQVDPKKKPQALDIGENFLKHDFLLENLASETPIYIVTEGNEPPFFTRFFTWDSSKSGMHGDSFQRKLAILTNKGKPLLDKPKRRVPAYSSRSTVPDKSQPRSRSMTFSPDRARVRGRSPAFNALAANFEKLNIRNQSTPPPMVSPMVRKLYPKSHAPDLSKIAPKSAIAARTALFEKPTPTSQEPPTSPSSSEATNQAEAPKSTSETNEEEAMSSINEDSKEEEAEEESSLPTFPYERLKTDSEDPVSDVDLTRREAYLTSVEFKEKFEMTKNEFYKLPKWKQNKLKMSVNLF.

6 Gelsolin-like repeats span residues 29 to 79, 150 to 190, 262 to 305, 396 to 453, 534 to 574, and 636 to 677; these read FKPV…DEAG, VRVK…QERA, GQTD…DQRK, LQVW…EDRA, MQAI…EDQE, and LKAT…KKKP. Residues 749-785 are disordered; sequence KPKRRVPAYSSRSTVPDKSQPRSRSMTFSPDRARVRG. The span at 758 to 776 shows a compositional bias: polar residues; that stretch reads SSRSTVPDKSQPRSRSMTF. Residues S777 and S787 each carry the phosphoserine modification. Positions 845–862 are enriched in low complexity; that stretch reads EKPTPTSQEPPTSPSSSE. Residues 845-917 are disordered; the sequence is EKPTPTSQEP…LKTDSEDPVS (73 aa). The segment covering 863–875 has biased composition (polar residues); the sequence is ATNQAEAPKSTSE. Residue S883 is modified to Phosphoserine. Positions 889-898 are enriched in acidic residues; that stretch reads SKEEEAEEES. One can recognise an HP domain in the interval 897 to 962; it reads ESSLPTFPYE…NKLKMSVNLF (66 aa).

It belongs to the villin/gelsolin family. Ubiquitous, but expressed preferentially in pollen and stamens.

Its subcellular location is the cytoplasm. The protein resides in the cytoskeleton. Major actin filament stabilizing factor and regulator of actin dynamics. Binds actin and actin filament bundles in a Ca(2+)-insensitive manner, but caps the barbed end of actin filaments and is able to sever them in a calcium-dependent manner. Required for the construction of actin collars in pollen tubes. Acts synergistically with VLN2 (AC O81644) to regulate polarized pollen tube growth. In Arabidopsis thaliana (Mouse-ear cress), this protein is Villin-5.